The primary structure comprises 340 residues: Phospho-N-acetylmuramoyl-pentapeptide-transferase (340 aa).

Helical transmembrane passes span Phe5–Asn25, Thr50–Thr70, Ser73–Ile93, Phe113–Asp133, Ile147–Ser167, Gly178–Ser198, Leu218–Tyr238, Ile242–Leu262, Ile267–Val287, and Ile318–Val338.

The protein belongs to the glycosyltransferase 4 family. MraY subfamily. It depends on Mg(2+) as a cofactor.

The protein localises to the cell membrane. The catalysed reaction is UDP-N-acetyl-alpha-D-muramoyl-L-alanyl-gamma-D-glutamyl-meso-2,6-diaminopimeloyl-D-alanyl-D-alanine + di-trans,octa-cis-undecaprenyl phosphate = di-trans,octa-cis-undecaprenyl diphospho-N-acetyl-alpha-D-muramoyl-L-alanyl-D-glutamyl-meso-2,6-diaminopimeloyl-D-alanyl-D-alanine + UMP. It functions in the pathway cell wall biogenesis; peptidoglycan biosynthesis. Functionally, catalyzes the initial step of the lipid cycle reactions in the biosynthesis of the cell wall peptidoglycan: transfers peptidoglycan precursor phospho-MurNAc-pentapeptide from UDP-MurNAc-pentapeptide onto the lipid carrier undecaprenyl phosphate, yielding undecaprenyl-pyrophosphoryl-MurNAc-pentapeptide, known as lipid I. The sequence is that of Phospho-N-acetylmuramoyl-pentapeptide-transferase from Buchnera aphidicola subsp. Baizongia pistaciae (strain Bp).